A 537-amino-acid chain; its full sequence is Putative cysteine ligase BshC (537 aa).

Positions 422–450 (IEKVEGMIEQQRRLYQDLLDEVAGNQNNI) form a coiled coil.

It belongs to the BshC family.

Its function is as follows. Involved in bacillithiol (BSH) biosynthesis. May catalyze the last step of the pathway, the addition of cysteine to glucosamine malate (GlcN-Mal) to generate BSH. The sequence is that of Putative cysteine ligase BshC from Staphylococcus aureus (strain MRSA252).